We begin with the raw amino-acid sequence, 56 residues long: Hydrophobic protein LTI6A (56 aa).

A run of 2 helical transmembrane segments spans residues 11 to 31 (IILA…CGIE) and 34 to 54 (ICLL…VWVI).

Belongs to the UPF0057 (PMP3) family. As to expression, expressed in shoot of cold stressed seedlings.

It localises to the membrane. Plays a role in the regulation of membrane potential. Could mediate a proton leak. In Oryza sativa subsp. japonica (Rice), this protein is Hydrophobic protein LTI6A (LTI6A).